The following is a 155-amino-acid chain: UPF0305 protein MTH_811 (155 aa).

The protein belongs to the UPF0305 family.

This is UPF0305 protein MTH_811 from Methanothermobacter thermautotrophicus (strain ATCC 29096 / DSM 1053 / JCM 10044 / NBRC 100330 / Delta H) (Methanobacterium thermoautotrophicum).